A 598-amino-acid chain; its full sequence is (+)-bornyl diphosphate synthase, chloroplastic (598 aa).

Residues 1 to 54 constitute a chloroplast transit peptide; that stretch reads MSIISMNVSILSKPLNCLHNLERRPSKALLVPCTAPTARLRASCSSKLQEAHQI. Arg314 is a binding site for substrate. Asp351 and Asp355 together coordinate Mg(2+). The short motif at 351–355 is the DDXXD motif element; sequence DDIYD. Arg493 provides a ligand contact to substrate. Mg(2+) contacts are provided by Asp496, Thr500, and Glu504. Substrate is bound at residue Thr500. Residue Lys512 participates in substrate binding.

The protein belongs to the terpene synthase family. In terms of assembly, homodimer. Requires Mg(2+) as cofactor.

It localises to the plastid. The protein localises to the chloroplast. It carries out the reaction (2E)-geranyl diphosphate = (2S,4R)-bornyl diphosphate. It catalyses the reaction (2E)-geranyl diphosphate = (1R,4S)-camphene + diphosphate. The enzyme catalyses (2E)-geranyl diphosphate = (1R,5R)-alpha-pinene + diphosphate. It functions in the pathway terpene metabolism; (R)-camphor biosynthesis. Catalyzes the formation of the (+)-camphor precursor (+)-bornyl diphosphate from geranyl diphosphate. The enzyme also produces significant amounts of (+)-alpha-pinene, (+)-camphene, and (+-)-limonene. The protein is (+)-bornyl diphosphate synthase, chloroplastic of Salvia officinalis (Sage).